We begin with the raw amino-acid sequence, 377 residues long: Molybdenum import ATP-binding protein ModC (377 aa).

The 238-residue stretch at 17 to 254 folds into the ABC transporter domain; it reads ITGDEAIRAR…LDLPFAHDED (238 aa). Residue 52 to 59 participates in ATP binding; the sequence is GHSGSGKT. In terms of domain architecture, Mop spans 313 to 377; sequence DSSILNVLPA…AQVKGVALLR (65 aa).

This sequence belongs to the ABC transporter superfamily. Molybdate importer (TC 3.A.1.8) family. The complex is composed of two ATP-binding proteins (ModC), two transmembrane proteins (ModB) and a solute-binding protein (ModA).

The protein localises to the cell inner membrane. The catalysed reaction is molybdate(out) + ATP + H2O = molybdate(in) + ADP + phosphate + H(+). Its function is as follows. Part of the ABC transporter complex ModABC involved in molybdenum import. Responsible for energy coupling to the transport system. The chain is Molybdenum import ATP-binding protein ModC from Aromatoleum aromaticum (strain DSM 19018 / LMG 30748 / EbN1) (Azoarcus sp. (strain EbN1)).